A 264-amino-acid polypeptide reads, in one-letter code: Thymidylate synthase (264 aa).

Residue Arg-21 participates in dUMP binding. (6R)-5,10-methylene-5,6,7,8-tetrahydrofolate is bound at residue His-51. Arg-126–Arg-127 contacts dUMP. Catalysis depends on Cys-146, which acts as the Nucleophile. Residues Arg-166 to Asp-169, Asn-177, and His-207 to Tyr-209 each bind dUMP. Position 169 (Asp-169) interacts with (6R)-5,10-methylene-5,6,7,8-tetrahydrofolate. Ala-263 is a binding site for (6R)-5,10-methylene-5,6,7,8-tetrahydrofolate.

This sequence belongs to the thymidylate synthase family. Bacterial-type ThyA subfamily. In terms of assembly, homodimer.

Its subcellular location is the cytoplasm. It catalyses the reaction dUMP + (6R)-5,10-methylene-5,6,7,8-tetrahydrofolate = 7,8-dihydrofolate + dTMP. It participates in pyrimidine metabolism; dTTP biosynthesis. Functionally, catalyzes the reductive methylation of 2'-deoxyuridine-5'-monophosphate (dUMP) to 2'-deoxythymidine-5'-monophosphate (dTMP) while utilizing 5,10-methylenetetrahydrofolate (mTHF) as the methyl donor and reductant in the reaction, yielding dihydrofolate (DHF) as a by-product. This enzymatic reaction provides an intracellular de novo source of dTMP, an essential precursor for DNA biosynthesis. The protein is Thymidylate synthase of Polynucleobacter asymbioticus (strain DSM 18221 / CIP 109841 / QLW-P1DMWA-1) (Polynucleobacter necessarius subsp. asymbioticus).